Here is a 273-residue protein sequence, read N- to C-terminus: WIMGHMVNSISQIKQFVNPGANAIEIDITFDSDAKAEYTYHKVPCDCFRTCGKWEYIDEYLKAVRNATTRGNRKYLRQLVLLIFDLKTSSLNRSTAYDAGKDFAERLLEHYWNNGENGGRAYVVLSIPNVRHYKFIIGFPDALNSEGHSELMQKVGYDFSGNDDLETIRRALRYAGVKGKNHIWQSDGITNCLSRTLKRVRKAVENRDSSDGYINKVYYWTVDKYATIRDTLDAEVDGIMTNYPNRVVDVLKEKCYSSRFRLATYSDNPFETF.

The active site involves His5. Mg(2+) is bound by residues Glu25 and Asp27. The Nucleophile role is filled by His41. 2 disulfide bridges follow: Cys45–Cys51 and Cys47–Cys192. Mg(2+) is bound at residue Asp85.

It belongs to the arthropod phospholipase D family. Class II subfamily. The cofactor is Mg(2+). In terms of tissue distribution, expressed by the venom gland.

It is found in the secreted. The catalysed reaction is an N-(acyl)-sphingosylphosphocholine = an N-(acyl)-sphingosyl-1,3-cyclic phosphate + choline. It carries out the reaction an N-(acyl)-sphingosylphosphoethanolamine = an N-(acyl)-sphingosyl-1,3-cyclic phosphate + ethanolamine. The enzyme catalyses a 1-acyl-sn-glycero-3-phosphocholine = a 1-acyl-sn-glycero-2,3-cyclic phosphate + choline. It catalyses the reaction a 1-acyl-sn-glycero-3-phosphoethanolamine = a 1-acyl-sn-glycero-2,3-cyclic phosphate + ethanolamine. Its function is as follows. Dermonecrotic toxins cleave the phosphodiester linkage between the phosphate and headgroup of certain phospholipids (sphingolipid and lysolipid substrates), forming an alcohol (often choline) and a cyclic phosphate. This toxin acts on sphingomyelin (SM). It may also act on ceramide phosphoethanolamine (CPE), lysophosphatidylcholine (LPC) and lysophosphatidylethanolamine (LPE), but not on lysophosphatidylserine (LPS), and lysophosphatidylglycerol (LPG). It acts by transphosphatidylation, releasing exclusively cyclic phosphate products as second products. Induces dermonecrosis, hemolysis, increased vascular permeability, edema, inflammatory response, and platelet aggregation. The protein is Dermonecrotic toxin LarSicTox-alphaVII1 of Loxosceles arizonica (Arizona brown spider).